A 66-amino-acid chain; its full sequence is Large ribosomal subunit protein bL33c (66 aa).

The protein belongs to the bacterial ribosomal protein bL33 family.

The protein resides in the plastid. Its subcellular location is the chloroplast. In Cicer arietinum (Chickpea), this protein is Large ribosomal subunit protein bL33c.